The primary structure comprises 335 residues: Syntaxin-18 (335 aa).

Over M1–N309 the chain is Cytoplasmic. A compositionally biased stretch (basic and acidic residues) spans K168–L208. Residues K168–E226 form a disordered region. A t-SNARE coiled-coil homology domain is found at I243–A305. A helical; Anchor for type IV membrane protein membrane pass occupies residues A310–L330. Over D331 to S335 the chain is Vesicular.

It belongs to the syntaxin family. As to quaternary structure, component of a SNARE complex consisting of STX18, USE1L, BNIP1/SEC20L, and SEC22B. RINT1/TIP20L and ZW10 are associated with the complex through interaction with BNIP1/SEC20L. Interacts directly with USE1L and BNIP1/SEC20L.

The protein resides in the endoplasmic reticulum membrane. It localises to the golgi apparatus membrane. Functionally, syntaxin that may be involved in targeting and fusion of Golgi-derived retrograde transport vesicles with the ER. In Pongo abelii (Sumatran orangutan), this protein is Syntaxin-18 (STX18).